The following is a 460-amino-acid chain: Bifunctional protein GlmU (460 aa).

Residues 1–229 (MSHYAIILAA…FEESLGVNDR (229 aa)) are pyrophosphorylase. UDP-N-acetyl-alpha-D-glucosamine-binding positions include 8-11 (LAAG), Lys-22, Gln-72, and 77-78 (GT). Position 102 (Asp-102) interacts with Mg(2+). Residues Gly-139, Glu-154, Asn-169, and Asn-227 each contribute to the UDP-N-acetyl-alpha-D-glucosamine site. Residue Asn-227 participates in Mg(2+) binding. Residues 230-250 (VALATAEDVMRRRINKAHMIN) form a linker region. Residues 251-460 (GVTFQNPNAT…KKPHHPSQQK (210 aa)) form an N-acetyltransferase region. The UDP-N-acetyl-alpha-D-glucosamine site is built by Arg-332 and Lys-350. His-362 functions as the Proton acceptor in the catalytic mechanism. 2 residues coordinate UDP-N-acetyl-alpha-D-glucosamine: Tyr-365 and Asn-376. Residues Ala-379, 385–386 (NY), Ser-404, Ala-422, and Arg-439 contribute to the acetyl-CoA site.

This sequence in the N-terminal section; belongs to the N-acetylglucosamine-1-phosphate uridyltransferase family. It in the C-terminal section; belongs to the transferase hexapeptide repeat family. Homotrimer. It depends on Mg(2+) as a cofactor.

The protein resides in the cytoplasm. It catalyses the reaction alpha-D-glucosamine 1-phosphate + acetyl-CoA = N-acetyl-alpha-D-glucosamine 1-phosphate + CoA + H(+). The enzyme catalyses N-acetyl-alpha-D-glucosamine 1-phosphate + UTP + H(+) = UDP-N-acetyl-alpha-D-glucosamine + diphosphate. It functions in the pathway nucleotide-sugar biosynthesis; UDP-N-acetyl-alpha-D-glucosamine biosynthesis; N-acetyl-alpha-D-glucosamine 1-phosphate from alpha-D-glucosamine 6-phosphate (route II): step 2/2. It participates in nucleotide-sugar biosynthesis; UDP-N-acetyl-alpha-D-glucosamine biosynthesis; UDP-N-acetyl-alpha-D-glucosamine from N-acetyl-alpha-D-glucosamine 1-phosphate: step 1/1. Its pathway is bacterial outer membrane biogenesis; LPS lipid A biosynthesis. In terms of biological role, catalyzes the last two sequential reactions in the de novo biosynthetic pathway for UDP-N-acetylglucosamine (UDP-GlcNAc). The C-terminal domain catalyzes the transfer of acetyl group from acetyl coenzyme A to glucosamine-1-phosphate (GlcN-1-P) to produce N-acetylglucosamine-1-phosphate (GlcNAc-1-P), which is converted into UDP-GlcNAc by the transfer of uridine 5-monophosphate (from uridine 5-triphosphate), a reaction catalyzed by the N-terminal domain. The sequence is that of Bifunctional protein GlmU from Streptococcus thermophilus (strain CNRZ 1066).